The sequence spans 236 residues: 2-C-methyl-D-erythritol 4-phosphate cytidylyltransferase (236 aa).

The protein belongs to the IspD/TarI cytidylyltransferase family. IspD subfamily. In terms of assembly, homodimer.

It catalyses the reaction 2-C-methyl-D-erythritol 4-phosphate + CTP + H(+) = 4-CDP-2-C-methyl-D-erythritol + diphosphate. It participates in isoprenoid biosynthesis; isopentenyl diphosphate biosynthesis via DXP pathway; isopentenyl diphosphate from 1-deoxy-D-xylulose 5-phosphate: step 2/6. In terms of biological role, catalyzes the formation of 4-diphosphocytidyl-2-C-methyl-D-erythritol from CTP and 2-C-methyl-D-erythritol 4-phosphate (MEP). This is 2-C-methyl-D-erythritol 4-phosphate cytidylyltransferase from Escherichia coli O157:H7.